The primary structure comprises 27 residues: Cupiennin-3c (27 aa).

Expressed by the venom gland.

Its subcellular location is the secreted. The polypeptide is Cupiennin-3c (Cupiennius salei (American wandering spider)).